Consider the following 795-residue polypeptide: MSKRHRLDLGEDYPSGKKRAGTDGKDRDRDRDREDRSKDRDRERDRGDREREREKEKEKELRASTNAMLISAGLPPLKASHSAHSTHSAHSAHSTHSAHSTHAGHAGHTSLPQCINPFTNLPHTPRYYDILKKRLQLPVWEYKDRFTDILVRHQSFVLVGETGSGKTTQIPQWCVEYMRSLPGPKRGVACTQPRRVAAMSVAQRVADEMDVMLGQEVGYSIRFEDCSSAKTILKYMTDGMLLREAMNDPLLERYGVIILDEAHERTLATDILMGVLKEVVRQRSDLKVIVMSATLDAGKFQIYFDNCPLLTIPGRTHPVEIFYTPEPERDYLEAAIRTVIQIHMCEEEEGDLLLFLTGQEEIDEACKRIKREVDDLGPEVGDIKIIPLYSTLPPQQQQRIFEPPPPKKQNGAIGRKVVVSTNIAETSLTIDGVVFVIDPGFAKQKVYNPRIRVESLLVTAISKASAQQRAGRAGRTRPGKCFRLYTEKAYKTEMQDNTYPEILRSNLGSVVLQLKKLGIDDLVHFDFMDPPAPETLMRALELLNYLAALNDDGDLTELGSMMAEFPLDPQLAKMVIASCDYNCSNEVLSITAMLSVPQCFVRPTEAKKAADEAKMRFAHIDGDHLTLLNVYHAFKQNHESVQWCYDNFINYRSLMSADNVRQQLSRIMDRFNLPRRSTDFTSRDYYINIRKALVTGYFMQVAHLERTGHYLTVKDNQVVQLHPSTVLDHKPEWVLYNEFVLTTKNYIRTCTDIKPEWLVKIAPQYYDMSNFPQCEAKRQLDRIIAKLQSKEYSQY.

The tract at residues 1–108 is disordered; that stretch reads MSKRHRLDLG…HSTHAGHAGH (108 aa). Phosphoserine is present on S15. A compositionally biased stretch (basic and acidic residues) spans 20–62; that stretch reads AGTDGKDRDRDRDREDRSKDRDRERDRGDREREREKEKEKELR. Low complexity predominate over residues 79 to 108; that stretch reads ASHSAHSTHSAHSAHSTHSAHSTHAGHAGH. A Helicase ATP-binding domain is found at 147–313; that stretch reads TDILVRHQSF…FDNCPLLTIP (167 aa). 160–167 lines the ATP pocket; it reads GETGSGKT. The DEAH box signature appears at 260–263; it reads DEAH. Residues 338–518 enclose the Helicase C-terminal domain; sequence TVIQIHMCEE…SVVLQLKKLG (181 aa). Residue K488 is modified to N6-acetyllysine. K786 is covalently cross-linked (Glycyl lysine isopeptide (Lys-Gly) (interchain with G-Cter in SUMO2)).

This sequence belongs to the DEAD box helicase family. DEAH subfamily. DDX15/PRP43 sub-subfamily. Component of the U11/U12 snRNPs that are part of the U12-type spliceosome. Identified in the Intron Large spliceosome complex (IL, also named intron lariat spliceosome), a post-mRNA release spliceosomal complex containing the excised intron, U2, U5 and U6 snRNPs, and splicing factors; the association may be transient. The IL complex exists in two distinct conformations, one with the DHX15 (ILS2) and one without (ILS1). Interacts with TFIP11 (via G-patch domain); indicative for a recruitment to the IL complex. Interacts with SSB/La. Interacts with GPATCH2 (via G-patch domain); promoting the RNA helicase activity. Interacts with NKRF (via G-patch domain); promoting the RNA helicase activity. Interacts with NLRP6.

The protein resides in the nucleus. Its subcellular location is the nucleolus. The enzyme catalyses ATP + H2O = ADP + phosphate + H(+). ATPase activity is enhanced upon binding to G-patch domain-containing proteins. G-patch domain-containing proteins act like a brace that tethers mobile sections of DHX15 together, stabilizing a functional conformation with high RNA affinity, thereby promoting the ATPase activity. Its function is as follows. RNA helicase involved in mRNA processing and antiviral innate immunity. Pre-mRNA processing factor involved in disassembly of spliceosomes after the release of mature mRNA. In cooperation with TFIP11 seem to be involved in the transition of the U2, U5 and U6 snRNP-containing IL complex to the snRNP-free IS complex leading to efficient debranching and turnover of excised introns. Plays a key role in antiviral innate immunity by promoting both MAVS-dependent signaling and NLRP6 inflammasome. Acts as an RNA virus sensor: recognizes and binds viral double stranded RNA (dsRNA) and activates the MAVS-dependent signaling to produce interferon-beta and interferon lambda-3 (IFNL3). Involved in intestinal antiviral innate immunity together with NLRP6: recognizes and binds viral dsRNA and promotes activation of the NLRP6 inflammasome in intestinal epithelial cells to restrict infection by enteric viruses. The NLRP6 inflammasome acts by promoting maturation and secretion of IL18 in the extracellular milieu. Also involved in antibacterial innate immunity by promoting Wnt-induced antimicrobial protein expression in Paneth cells. The protein is ATP-dependent RNA helicase DHX15 of Pongo abelii (Sumatran orangutan).